Consider the following 216-residue polypeptide: Urease accessory protein UreG (216 aa).

24–31 lines the GTP pocket; the sequence is GPVGSGKT.

Belongs to the SIMIBI class G3E GTPase family. UreG subfamily. Homodimer. UreD, UreF and UreG form a complex that acts as a GTP-hydrolysis-dependent molecular chaperone, activating the urease apoprotein by helping to assemble the nickel containing metallocenter of UreC. The UreE protein probably delivers the nickel.

The protein resides in the cytoplasm. Facilitates the functional incorporation of the urease nickel metallocenter. This process requires GTP hydrolysis, probably effectuated by UreG. This chain is Urease accessory protein UreG, found in Variovorax paradoxus (strain S110).